We begin with the raw amino-acid sequence, 739 residues long: Probable beta-glucosidase L (739 aa).

An N-terminal signal peptide occupies residues 1–17 (MQNLFLSLLAAAVTVHA). N-linked (GlcNAc...) asparagine glycosylation is present at N224. The active site involves D252. N398 carries N-linked (GlcNAc...) asparagine glycosylation.

This sequence belongs to the glycosyl hydrolase 3 family.

The protein localises to the secreted. It carries out the reaction Hydrolysis of terminal, non-reducing beta-D-glucosyl residues with release of beta-D-glucose.. The protein operates within glycan metabolism; cellulose degradation. Its function is as follows. Beta-glucosidases are one of a number of cellulolytic enzymes involved in the degradation of cellulosic biomass. Catalyzes the last step releasing glucose from the inhibitory cellobiose. The polypeptide is Probable beta-glucosidase L (bglL) (Neosartorya fischeri (strain ATCC 1020 / DSM 3700 / CBS 544.65 / FGSC A1164 / JCM 1740 / NRRL 181 / WB 181) (Aspergillus fischerianus)).